Consider the following 301-residue polypeptide: HTH-type transcriptional regulator MtrA (301 aa).

The HTH araC/xylS-type domain occupies 196–297 (KRLGHLIQKV…HVSPGQYRKE (102 aa)). 2 DNA-binding regions (H-T-H motif) span residues 216–237 (DKMVAAANMSRAQLMRRFKSQV) and 264–287 (VLEVALSVGFQSETHFGKAFKRQY).

Its activity is regulated as follows. The affinity for the mtrCDE promoter increases 2-fold in the presence of TX-100, a known effector and substrate of the MtrCDE pump. Its function is as follows. Involved in the induction of the mtrCDE-encoded efflux pump. Binds specifically to the mtrCDE promoter region. Required for high-level inducible resistance to the detergent Triton X-100 (TX-100) and the spermicide nonoxynol-9 (N-9). In Neisseria gonorrhoeae, this protein is HTH-type transcriptional regulator MtrA.